Here is a 146-residue protein sequence, read N- to C-terminus: Oxygen-independent coproporphyrinogen III oxidase (146 aa).

Tyrosine 54 is an S-adenosyl-L-methionine binding site. 2 residues coordinate [4Fe-4S] cluster: cysteine 60 and cysteine 64. Residue phenylalanine 66 participates in S-adenosyl-L-methionine binding. Cysteine 67 is a binding site for [4Fe-4S] cluster. Residues 111–112 (GT) and glutamate 143 each bind S-adenosyl-L-methionine.

Belongs to the anaerobic coproporphyrinogen-III oxidase family. In terms of assembly, monomer. Requires [4Fe-4S] cluster as cofactor.

It is found in the cytoplasm. It carries out the reaction coproporphyrinogen III + 2 S-adenosyl-L-methionine = protoporphyrinogen IX + 2 5'-deoxyadenosine + 2 L-methionine + 2 CO2. Its pathway is porphyrin-containing compound metabolism; protoporphyrin-IX biosynthesis; protoporphyrinogen-IX from coproporphyrinogen-III (AdoMet route): step 1/1. Its function is as follows. Involved in the heme biosynthesis. Catalyzes the anaerobic oxidative decarboxylation of propionate groups of rings A and B of coproporphyrinogen III to yield the vinyl groups in protoporphyrinogen IX. The sequence is that of Oxygen-independent coproporphyrinogen III oxidase (hemN) from Mannheimia haemolytica (Pasteurella haemolytica).